The sequence spans 578 residues: Putative multidrug export ATP-binding/permease protein SAB1799c (578 aa).

Residues 1–15 (MIKRYLQFVKPYKYR) are Cytoplasmic-facing. A helical membrane pass occupies residues 16 to 36 (IFATIIVGIIKFGIPMLIPLL). Residues 16-306 (IFATIIVGII…LVASFTTLTQ (291 aa)) enclose the ABC transmembrane type-1 domain. Residues 37–59 (IKYAIDGVINNHALTTDEKVHHL) are Extracellular-facing. A helical transmembrane segment spans residues 60–80 (TIAIGIALFIFVIVRPPIEFI). The Cytoplasmic portion of the chain corresponds to 81–138 (RQYLAQWTSNKILYDIRKKLYNHLQALSARFYANNQVGQVISRVINDVEQTKDFILTG). The helical transmembrane segment at 139-159 (LMNIWLDCITIIIALSIMFFL) threads the bilayer. Over 160–162 (DVK) the chain is Extracellular. The chain crosses the membrane as a helical span at residues 163 to 183 (LTLAALFIFPFYILTVYVFFG). Over 184–242 (RLRKLTRERSQALAEVQGFLHERVQGISVVKSFAIEDNEAKNFDKKNANFLTRALKHTR) the chain is Cytoplasmic. The helical transmembrane segment at 243 to 262 (WNAYSFATINTVTDIGPIIV) threads the bilayer. Residues 263-267 (IGVGA) are Extracellular-facing. The chain crosses the membrane as a helical span at residues 268–287 (YLAISGSITVGTLAAFVGYL). The Cytoplasmic segment spans residues 288-578 (ELLFGPLRRL…YEHLYSIQNL (291 aa)). In terms of domain architecture, ABC transporter spans 340–575 (IDIYHVNFQY…QGAYEHLYSI (236 aa)). An ATP-binding site is contributed by 374–381 (GMSGGGKS).

Belongs to the ABC transporter superfamily. Homodimer.

It localises to the cell membrane. Its function is as follows. May be involved in multidrug export. Transmembrane domains (TMD) form a pore in the cell membrane and the ATP-binding domain (NBD) is responsible for energy generation. The sequence is that of Putative multidrug export ATP-binding/permease protein SAB1799c from Staphylococcus aureus (strain bovine RF122 / ET3-1).